A 272-amino-acid polypeptide reads, in one-letter code: 2-amino-3,7-dideoxy-D-threo-hept-6-ulosonate synthase (272 aa).

D33 functions as the Proton acceptor in the catalytic mechanism. 1-deoxy-D-threo-hexo-2,5-diulose 6-phosphate-binding positions include 33-37 (DHGVS) and 153-155 (YPR). Y153 serves as the catalytic Proton donor. K184 functions as the Schiff-base intermediate with substrate in the catalytic mechanism. Residues 209-210 (GG) and 237-238 (GR) contribute to the 1-deoxy-D-threo-hexo-2,5-diulose 6-phosphate site.

It belongs to the DeoC/FbaB aldolase family. ADHS subfamily. As to quaternary structure, homodecamer.

The enzyme catalyses 1-deoxy-D-threo-hexo-2,5-diulose 6-phosphate + L-aspartate 4-semialdehyde = 2,3-dioxopropyl phosphate + 2-amino-2,3,7-trideoxy-D-lyxo-hept-6-ulosonate. In terms of biological role, catalyzes a transaldol reaction between 6-deoxy-5-ketofructose 1-phosphate (DKFP) and L-aspartate semialdehyde (ASA) with an elimination of hydroxypyruvaldehyde phosphate to yield 2-amino-3,7-dideoxy-D-threo-hept-6-ulosonate (ADH). Plays a key role in an alternative pathway of the biosynthesis of 3-dehydroquinate (DHQ), which is involved in the canonical pathway for the biosynthesis of aromatic amino acids and which is also a precursor for the biosynthesis of p-aminobenzoic acid (PABA) in M.maripaludis. Does not possess fructose-bisphosphate (FBP) aldolase activity. This Methanococcus maripaludis (strain DSM 14266 / JCM 13030 / NBRC 101832 / S2 / LL) protein is 2-amino-3,7-dideoxy-D-threo-hept-6-ulosonate synthase.